The chain runs to 439 residues: MGKPIVAIVGRPNVGKSTLFNKLAGKRIAIVQDTPGVTRDRIYAEAEWLNYKFTMIDTGGIEPKSEDIIVSQMRRQAQIAIEMANVIIFLVDGKEGLAPADEEVAQMLRKSKKPVVLVVNKIDKLKDENNAYEFYNLGIGDPVTISSSQALGLGDMLDRVVEYFKDDESDGEDDERINIAFIGKPNVGKSSLINKLLGEERLIVSDIPGTTRDSIDSYVDTEFGEFTLIDTAGLRRKSKVKEEIERYSVIRTYASIERADVCILMIDATEGISEQDQKIIGYAHDINKAILVIVNKWDLVEKDDKTMDKFKKELKVNLSFMPYAKYLFISAKTGQRIVKVLQTAKECYDNYTKRVKTGVLNDVISQAIMMKEPPIVGTKRLKIYYVTQIGTKPPTFIFFVNDPACIHFSYQRYLENQLRENFDFQGTGIKLEFRERKEK.

2 consecutive EngA-type G domains span residues 4–168 (PIVA…KDDE) and 177–352 (INIA…DNYT). Residues 10 to 17 (GRPNVGKS), 57 to 61 (DTGGI), 120 to 123 (NKID), 183 to 190 (GKPNVGKS), 230 to 234 (DTAGL), and 295 to 298 (NKWD) each bind GTP. Residues 353–437 (KRVKTGVLND…GIKLEFRERK (85 aa)) form the KH-like domain.

This sequence belongs to the TRAFAC class TrmE-Era-EngA-EngB-Septin-like GTPase superfamily. EngA (Der) GTPase family. Associates with the 50S ribosomal subunit.

Its function is as follows. GTPase that plays an essential role in the late steps of ribosome biogenesis. The chain is GTPase Der from Clostridium botulinum (strain Langeland / NCTC 10281 / Type F).